Consider the following 107-residue polypeptide: MARFTLHDLAATVDARAASGGESSYTKKLLDKGPEHCAKKFGEEAVEMVIAAVENDRGHLISETADVLFHMLVLLKSRGVKLEEVEAALAQRTSMSGLEEKASRKRD.

Belongs to the PRA-PH family.

Its subcellular location is the cytoplasm. It carries out the reaction 1-(5-phospho-beta-D-ribosyl)-ATP + H2O = 1-(5-phospho-beta-D-ribosyl)-5'-AMP + diphosphate + H(+). The protein operates within amino-acid biosynthesis; L-histidine biosynthesis; L-histidine from 5-phospho-alpha-D-ribose 1-diphosphate: step 2/9. This chain is Phosphoribosyl-ATP pyrophosphatase 1 (hisE1), found in Rhodopseudomonas palustris (strain ATCC BAA-98 / CGA009).